The primary structure comprises 284 residues: RNase adapter protein RapZ (284 aa).

An ATP-binding site is contributed by 8–15 (GRSGSGKS). 56–59 (DVRN) is a binding site for GTP. Positions 266–284 (RSRGKNVQSRHRTLEKRKP) are RNA-binding.

Belongs to the RapZ-like family. RapZ subfamily. Homotrimer.

Modulates the synthesis of GlmS, by affecting the processing and stability of the regulatory small RNA GlmZ. When glucosamine-6-phosphate (GlcN6P) concentrations are high in the cell, RapZ binds GlmZ and targets it to cleavage by RNase E. Consequently, GlmZ is inactivated and unable to activate GlmS synthesis. Under low GlcN6P concentrations, RapZ is sequestered and inactivated by an other regulatory small RNA, GlmY, preventing GlmZ degradation and leading to synthesis of GlmS. This chain is RNase adapter protein RapZ, found in Shigella boydii serotype 18 (strain CDC 3083-94 / BS512).